Reading from the N-terminus, the 574-residue chain is MKIYEIVPVALGKKMPDVLIKNVNLVNVFTGKIEKTNIALYKKRIAGIGDDYKVGKEVIDAKGLFAIPGLIDAHVHIESSMLSPTEFAKLILPFGTTTIIADPHEIANVLGVEGIEYMIKSTEGIPLNVYFAIPSAVPATNLETSGATLGAEDMVSLVEKYPFRIIALGEVMNYPGVLDCDRDLITKIEILRHKYKKIDGHAPGLTGKELNAYIDAFVRSDHECETKEEALEKLSKGMQIFIREGTAARNLNALLPAVNEMNHFFFSFCTDDRDPNDIIERGHINGIIKSAIDSGIDPIIAIRMATINTAKYFNLRSMGAISPGYKADIVFIDNLKDFNIKFVIKDSKIVVEDKRINMNVESIIRNIPNTLGKINIVKNYSLSIKNRNRKIRVISVKSGTLLTDELIVEPNVEKGYVVSDIDRDIIKIAVFDRHKASGYSIGFVHGLSIKNGAVATTIGHDSHNLTVVGTNDEDMNYAISRIKELNGGIVVVKNKKLIASLSLPIAGLMSDKNYGFVVEELRKLKNSLVEIGVNSDILMQIHFLQLAVIPKLKITDKGLIDVEKQKIVDLFVEV.

The protein belongs to the metallo-dependent hydrolases superfamily. Adenine deaminase family. Mn(2+) serves as cofactor.

The catalysed reaction is adenine + H2O + H(+) = hypoxanthine + NH4(+). The polypeptide is Adenine deaminase (Thermosipho africanus (strain TCF52B)).